Here is a 411-residue protein sequence, read N- to C-terminus: uncharacterized protein (411 aa).

Positions 1 to 21 (MHSRILLLLLMFAFNVGLINC) are cleaved as a signal peptide. The 40-residue stretch at 28-67 (PQSNCKIRCENGGMCVFDLERPDFHSCICLLGVYTGDRCQ) folds into the EGF-like domain. 3 cysteine pairs are disulfide-bonded: Cys32/Cys42, Cys36/Cys54, and Cys56/Cys66. Residues 78 to 97 (TATSDETSHPMNIQHQQSQA) show a composition bias toward polar residues. Disordered regions lie at residues 78-312 (TATS…EPIR) and 337-375 (HPIE…EYGM). Over residues 100 to 230 (DDARRRDDER…VEKELNDKRT (131 aa)) the composition is skewed to basic and acidic residues. Residues 237–266 (FEYEGGDEEYPQVAEKEDEYDEGYETDNTE) are compositionally biased toward acidic residues. Residues 267–276 (DVTITTTKTT) are compositionally biased toward low complexity.

This is an uncharacterized protein from Caenorhabditis elegans.